The sequence spans 244 residues: 1-(5-phosphoribosyl)-5-[(5-phosphoribosylamino)methylideneamino] imidazole-4-carboxamide isomerase (244 aa).

The Proton acceptor role is filled by Asp8. Asp129 functions as the Proton donor in the catalytic mechanism.

It belongs to the HisA/HisF family.

The protein resides in the cytoplasm. The enzyme catalyses 1-(5-phospho-beta-D-ribosyl)-5-[(5-phospho-beta-D-ribosylamino)methylideneamino]imidazole-4-carboxamide = 5-[(5-phospho-1-deoxy-D-ribulos-1-ylimino)methylamino]-1-(5-phospho-beta-D-ribosyl)imidazole-4-carboxamide. It participates in amino-acid biosynthesis; L-histidine biosynthesis; L-histidine from 5-phospho-alpha-D-ribose 1-diphosphate: step 4/9. This chain is 1-(5-phosphoribosyl)-5-[(5-phosphoribosylamino)methylideneamino] imidazole-4-carboxamide isomerase, found in Thermodesulfovibrio yellowstonii (strain ATCC 51303 / DSM 11347 / YP87).